A 1085-amino-acid polypeptide reads, in one-letter code: MEDKEQQDNAKLENNESLKDLGVNVLSQSSLEEKIANDVTNFSNLQSLQQEETRLERSKTALQRYVNKKNHLTRKLNNTTRISVKQNLRDQIKNLQSDDIERVLKDIDDIQSRIKELKEQVDQGAENKGSKEGLQRPGETEKEFLIRTGKITAFGHKAGFSLDTANREYAKNDEQKDEDFEMATEQMVENLTDEDDNLSDQDYQMSGKESEDDEEEENDDKILKELEDLRFRGQPGEAKDDGDELYYQERLKKWVKQRSCGSQRSSDLPEWRRPHPNIPDAKLNSQFKIPGEIYSLLFNYQKTCVQWLYELYQQNCGGIIGDEMGLGKTIQVIAFIAALHHSGLLTGPVLIVCPATVMKQWCNEFQHWWPPLRTVILHSMGSGMASDQKFKMDENDLENLIMNSKPSDFSYEDWKNSTRTKKALESSYHLDKLIDKVVTDGHILITTYVGLRIHSDKLLKVKWQYAVLDEGHKIRNPDSEISLTCKKLKTHNRIILSGTPIQNNLTELWSLFDFIFPGKLGTLPVFQQQFVIPINIGGYANATNIQVQTGYKCAVALRDLISPYLLRRVKADVAKDLPQKKEMVLFCKLTKYQRSKYLEFLHSSDLNQIQNGKRNVLFGIDILRKICNHPDLLDRDTKRHNPDYGDPKRSGKMQVVKQLLLLWHKQGYKALLFTQSRQMLDILEEFISTKDPDLSHLNYLRMDGTTNIKGRQSLVDRFNNESFDVFLLTTRVGGLGVNLTGANRIIIFDPDWNPSTDMQARERAWRIGQKREVSIYRLMVGGSIEEKIYHRQIFKQFLTNRILTDPKQKRFFKIHELHDLFSLGGENGYSTEELNEEVQKHTENLKNSKSEESDDFEQLVNLSGVSKLESFYNGKEKKENSKTEDDRLIEGLLGGESNLETVMSHDSVVNSHAGSSSSNIITKEASRVAIEAVNALRKSRKKITKQYEIGTPTWTGRFGKAGKIRKRDPLKNKLTGSAAILGNITKSQKEASKEARQENYDDGITFARSKEINSNTKTLENIRAYLQKQNNFFSSSVSILNSIGVSLSDKEDVIKVRALLKTIAQFDKERKGWVLDEEFRNNNAS.

Phosphoserine is present on Ser30. 2 disordered regions span residues 118 to 141 (KEQV…GETE) and 190 to 219 (NLTD…EEND). Positions 128–141 (KGSKEGLQRPGETE) are enriched in basic and acidic residues. Residues 210–219 (SEDDEEEEND) are compositionally biased toward acidic residues. One can recognise a Helicase ATP-binding domain in the interval 309-518 (YELYQQNCGG…WSLFDFIFPG (210 aa)). 322–329 (DEMGLGKT) lines the ATP pocket. Residues 469–472 (DEGH) carry the DEGH box motif. The region spanning 655–818 (VVKQLLLLWH…KRFFKIHELH (164 aa)) is the Helicase C-terminal domain.

Belongs to the SNF2/RAD54 helicase family.

It localises to the nucleus. The catalysed reaction is ATP + H2O = ADP + phosphate + H(+). In terms of biological role, may be involved in the preferential repair of active genes. The polypeptide is DNA repair and recombination protein RAD26 (RAD26) (Saccharomyces cerevisiae (strain ATCC 204508 / S288c) (Baker's yeast)).